The sequence spans 168 residues: Protein C2-DOMAIN ABA-RELATED 3 (168 aa).

In terms of domain architecture, C2 spans 1-106 (MSLMDNLLGI…IEALRMELSG (106 aa)). Positions 24, 25, 30, 76, 77, 78, and 84 each coordinate Ca(2+).

Belongs to the plant CAR protein family. As to quaternary structure, binds to PYR/PYL/RCAR abscisic acid intracellular receptors in an ABA-independent manner, both at the plasma membrane and in the nucleus. Ca(2+) serves as cofactor.

Its subcellular location is the cell membrane. It is found in the nucleus. Functionally, stimulates the GTPase/ATPase activities of Obg-like ATPases. Mediates the transient calcium-dependent interaction of PYR/PYL/RCAR abscisic acid (ABA) receptors with the plasma membrane and thus regulates ABA sensitivity. This Arabidopsis thaliana (Mouse-ear cress) protein is Protein C2-DOMAIN ABA-RELATED 3.